The primary structure comprises 288 residues: MIAVTTESTADILPLQLGYSGIHLLPVPLGHQGQVYSERELPPDQLVNLIRTTGEPARTLAIDDEVVARTFEAALQGSKSGRLVHVASGSRFTPHFEVAARVAGQFGVRVQVIDGGTVSYALGVQALHAAHLADQGADFGQIARALAELRERTLLTFAVESLDFLRVNGRIGNVAAFIGNWLGLRPLLAVEAGEVVSKARVRGQAAAVRTLLSATHQFQHQTGETLRLYCGHTIGGEGAAEQLQGQLQAVYRDLPAPLHPLGSGLTANVGPGVVAVLAFPRRFGLGHA.

Residues isoleucine 2–proline 280 form the DegV domain. Hexadecanoate contacts are provided by threonine 59 and threonine 93.

In terms of biological role, may bind long-chain fatty acids, such as palmitate, and may play a role in lipid transport or fatty acid metabolism. This is DegV domain-containing protein DR_1903 from Deinococcus radiodurans (strain ATCC 13939 / DSM 20539 / JCM 16871 / CCUG 27074 / LMG 4051 / NBRC 15346 / NCIMB 9279 / VKM B-1422 / R1).